A 335-amino-acid chain; its full sequence is Glycerol-3-phosphate dehydrogenase [NAD(P)+] (335 aa).

Residues Ser10, Phe11, Arg31, and Lys105 each contribute to the NADPH site. Sn-glycerol 3-phosphate contacts are provided by Lys105, Gly136, and Ser138. Position 140 (Ala140) interacts with NADPH. Residues Lys191, Asp244, Ser254, Arg255, and Asn256 each coordinate sn-glycerol 3-phosphate. Catalysis depends on Lys191, which acts as the Proton acceptor. Residue Arg255 coordinates NADPH. Positions 279 and 281 each coordinate NADPH.

It belongs to the NAD-dependent glycerol-3-phosphate dehydrogenase family.

It localises to the cytoplasm. The catalysed reaction is sn-glycerol 3-phosphate + NAD(+) = dihydroxyacetone phosphate + NADH + H(+). It carries out the reaction sn-glycerol 3-phosphate + NADP(+) = dihydroxyacetone phosphate + NADPH + H(+). The protein operates within membrane lipid metabolism; glycerophospholipid metabolism. Catalyzes the reduction of the glycolytic intermediate dihydroxyacetone phosphate (DHAP) to sn-glycerol 3-phosphate (G3P), the key precursor for phospholipid synthesis. The sequence is that of Glycerol-3-phosphate dehydrogenase [NAD(P)+] from Leptospira interrogans serogroup Icterohaemorrhagiae serovar Lai (strain 56601).